The following is a 373-amino-acid chain: Leucoanthocyanidin dioxygenase 2 (373 aa).

One can recognise a Fe2OG dioxygenase domain in the interval 216–315 (LLLQLKINYY…RVSWVVFCEP (100 aa)). Residues H240, D242, and H296 each coordinate Fe cation. R306 is a 2-oxoglutarate binding site.

This sequence belongs to the iron/ascorbate-dependent oxidoreductase family. It depends on L-ascorbate as a cofactor. Fe(2+) serves as cofactor.

The catalysed reaction is a (2R,3S,4S)-leucoanthocyanidin + 2-oxoglutarate + O2 = a 4-H-anthocyanidin with a 3-hydroxy group + succinate + CO2 + 2 H2O. It functions in the pathway pigment biosynthesis; anthocyanin biosynthesis. In terms of biological role, involved in anthocyanin and protoanthocyanidin biosynthesis by catalyzing the oxidation of leucoanthocyanidins into anthocyanidins. The sequence is that of Leucoanthocyanidin dioxygenase 2 from Oryza sativa subsp. japonica (Rice).